The primary structure comprises 107 residues: MNTFLLSALCLGAWAALVGAVTVQDGDFSFSLESVKKLKDLQEAPESKVQGRRKFVAPPLCSFSGFPEELRPVCKEPNSQDILNRLAVIAQDPSTCEICAYAACAGC.

The signal sequence occupies residues 1 to 20; sequence MNTFLLSALCLGAWAALVGA. Positions 21 to 92 are excised as a propeptide; it reads VTVQDGDFSF…LNRLAVIAQD (72 aa). Intrachain disulfides connect C61–C74, C96–C104, and C99–C107.

It belongs to the guanylin family.

It is found in the secreted. Functionally, endogenous activator of intestinal guanylate cyclase. It stimulates this enzyme through the same receptor binding region as the heat-stable enterotoxins. This Cavia porcellus (Guinea pig) protein is Guanylin (GUCA2A).